Reading from the N-terminus, the 81-residue chain is Photosystem I iron-sulfur center (81 aa).

2 consecutive 4Fe-4S ferredoxin-type domains span residues 2–31 (SHAV…MVPW) and 39–68 (IAAS…IRVY). Residues Cys-11, Cys-14, Cys-17, Cys-21, Cys-48, Cys-51, Cys-54, and Cys-58 each coordinate [4Fe-4S] cluster.

As to quaternary structure, the cyanobacterial PSI reaction center is composed of one copy each of PsaA,B,C,D,E,F,I,J,K,L,M and X, and forms trimeric complexes. [4Fe-4S] cluster serves as cofactor.

Its subcellular location is the cellular thylakoid membrane. The catalysed reaction is reduced [plastocyanin] + hnu + oxidized [2Fe-2S]-[ferredoxin] = oxidized [plastocyanin] + reduced [2Fe-2S]-[ferredoxin]. Its function is as follows. Apoprotein for the two 4Fe-4S centers FA and FB of photosystem I (PSI); essential for photochemical activity. FB is the terminal electron acceptor of PSI, donating electrons to ferredoxin. The C-terminus interacts with PsaA/B/D and helps assemble the protein into the PSI complex. Required for binding of PsaD and PsaE to PSI. PSI is a plastocyanin/cytochrome c6-ferredoxin oxidoreductase, converting photonic excitation into a charge separation, which transfers an electron from the donor P700 chlorophyll pair to the spectroscopically characterized acceptors A0, A1, FX, FA and FB in turn. This Prochlorococcus marinus (strain MIT 9313) protein is Photosystem I iron-sulfur center.